A 249-amino-acid chain; its full sequence is MYKVVLLRHGESIWNMENRFTGWTDVDLSPKGIEEAKQAGKILKEKGFTFDAAFTSVLKRAIRTLWIVLDELDLMWIPVYKSWRLNERHYGALQGLNKAETAKKYGEEQVKLWRRSAEVRPPALTKDDPRYPGNDPRYADLSEDEIPLTENLIDTINRVIPYWESTIAPTIKSGKRVIIAAHGNSLRGLVKYLDNLSNEEIMELNIPTGIPLVYELDENLKPIRHYYLADEEELKKKQQEVAEQGKARA.

Substrate is bound by residues 8-15 (RHGESIWN), 21-22 (TG), R60, 87-90 (ERHY), K98, 114-115 (RR), and 183-184 (GN). H9 functions as the Tele-phosphohistidine intermediate in the catalytic mechanism. E87 functions as the Proton donor/acceptor in the catalytic mechanism.

The protein belongs to the phosphoglycerate mutase family. BPG-dependent PGAM subfamily.

It carries out the reaction (2R)-2-phosphoglycerate = (2R)-3-phosphoglycerate. Its pathway is carbohydrate degradation; glycolysis; pyruvate from D-glyceraldehyde 3-phosphate: step 3/5. Its function is as follows. Catalyzes the interconversion of 2-phosphoglycerate and 3-phosphoglycerate. This chain is 2,3-bisphosphoglycerate-dependent phosphoglycerate mutase, found in Caldanaerobacter subterraneus subsp. tengcongensis (strain DSM 15242 / JCM 11007 / NBRC 100824 / MB4) (Thermoanaerobacter tengcongensis).